The chain runs to 829 residues: Periplasmic nitrate reductase (829 aa).

The tat-type signal signal peptide spans 1–29 (MKMTRRAFVKANAAASAAAVAGVTLPASA). Residues 41–97 (IKWDKAPCRFCGTGCSVLVGTQNGRVVATQGDPEAPVNKGLNCIKGYFLSKIMYGKD) form the 4Fe-4S Mo/W bis-MGD-type domain. Residues Cys48, Cys51, Cys55, and Cys83 each contribute to the [4Fe-4S] cluster site. Mo-bis(molybdopterin guanine dinucleotide)-binding positions include Lys85, Gln152, Asn177, Cys181, 214-221 (WGSNMAEM), 245-249 (STYYH), 264-266 (QSD), Met374, Gln378, Asn484, 510-511 (SD), Lys533, Asp560, and 718-727 (TGRVLEHWHT). Phe794 lines the substrate pocket. Residues Asn802 and Lys819 each contribute to the Mo-bis(molybdopterin guanine dinucleotide) site.

It belongs to the prokaryotic molybdopterin-containing oxidoreductase family. NasA/NapA/NarB subfamily. In terms of assembly, component of the periplasmic nitrate reductase NapAB complex composed of NapA and NapB. It depends on [4Fe-4S] cluster as a cofactor. Mo-bis(molybdopterin guanine dinucleotide) is required as a cofactor. Predicted to be exported by the Tat system. The position of the signal peptide cleavage has not been experimentally proven.

The protein localises to the periplasm. The enzyme catalyses 2 Fe(II)-[cytochrome] + nitrate + 2 H(+) = 2 Fe(III)-[cytochrome] + nitrite + H2O. In terms of biological role, catalytic subunit of the periplasmic nitrate reductase complex NapAB. Receives electrons from NapB and catalyzes the reduction of nitrate to nitrite. In Aliivibrio fischeri (strain MJ11) (Vibrio fischeri), this protein is Periplasmic nitrate reductase.